The following is a 479-amino-acid chain: PTS system MurNAc-GlcNAc-specific EIIBC component (479 aa).

The PTS EIIB type-1 domain occupies 5–87; that stretch reads QILAEHIIDA…SELSGAPLGE (83 aa). Residue cysteine 27 is the Phosphocysteine intermediate; for EIIB activity of the active site. The region spanning 125–479 is the PTS EIIC type-1 domain; sequence KTIANIFIPL…AMRESDTLGD (355 aa). Transmembrane regions (helical) follow at residues 130-150, 169-189, 195-215, 229-249, 269-289, 303-323, 344-364, 379-399, 403-423, and 445-465; these read IFIP…IAAV, VTVF…FTGI, FGAT…TGLT, LQPG…LSII, ITLF…AGFV, IGGV…VMLG, LLPI…ALWV, ALPV…TLPL, FITA…IGHI, and LGYI…TYFF.

It localises to the cell membrane. The catalysed reaction is N-acetyl-beta-D-muramate-(1-&gt;4)-N-acetyl-D-glucosamine(out) + N(pros)-phospho-L-histidyl-[protein] = 6-phospho-N-acetyl-beta-D-muramate-(1-&gt;4)-N-acetyl-D-glucosamine(in) + L-histidyl-[protein]. It participates in cell wall biogenesis; peptidoglycan recycling. Its function is as follows. The phosphoenolpyruvate-dependent sugar phosphotransferase system (sugar PTS), a major carbohydrate active transport system, catalyzes the phosphorylation of incoming sugar substrates concomitantly with their translocation across the cell membrane. This system is involved in the uptake and phosphorylation of MurNAc-GlcNAc, the principle peptidoglycan turnover product of S.aureus, yielding cytoplasmic MurNAc 6P-GlcNAc. This is PTS system MurNAc-GlcNAc-specific EIIBC component from Staphylococcus saprophyticus subsp. saprophyticus (strain ATCC 15305 / DSM 20229 / NCIMB 8711 / NCTC 7292 / S-41).